Reading from the N-terminus, the 1099-residue chain is SLIT-ROBO Rho GTPase-activating protein 3 (1099 aa).

In terms of domain architecture, F-BAR spans 19-314 (AQIKEIRTQL…AVDNLDSRSD (296 aa)). Residues 205–225 (HEDRPQRRSSVKKIEKMKEKR) are disordered. The stretch at 352 to 392 (QTELLMRYHQLQSRLATLKIENEEVRKTLDATMQTLQDMLT) forms a coiled coil. The tract at residues 471–493 (ERAECGTTRPPCLPPKPQKMRRP) is disordered. One can recognise a Rho-GAP domain in the interval 506–694 (GSMEAFIKDS…TIIIHHEAIF (189 aa)). One can recognise an SH3 domain in the interval 744–803 (VEQIEAIAKFDYMGRSPRELSFKKGASLLLYHRASEDWWEGRHNGVDGLIPHQYIVVQDM). Positions 809–820 (DSLSQKADSEAS) are enriched in polar residues. The segment at 809-847 (DSLSQKADSEASSGPLLDDKASSKNDLQSPTEHISDYGF) is disordered. 5 positions are modified to phosphoserine: Ser817, Ser820, Ser821, Ser837, and Ser858. 2 disordered regions span residues 861 to 911 (AAIP…SPEK) and 926 to 950 (PDKKALSEGHSMRSTCGSTRHSSLG). The segment covering 926-936 (PDKKALSEGHS) has biased composition (basic and acidic residues). The segment covering 937-947 (MRSTCGSTRHS) has biased composition (polar residues). A coiled-coil region spans residues 952-987 (HKSLEAEALAEDIEKTMSTALHELRELERQNTVKQA). Residue Ser954 is modified to Phosphoserine. The segment at 995-1099 (LEPLKNPPGP…NSSADKSGTM (105 aa)) is disordered. 2 stretches are compositionally biased toward low complexity: residues 1026–1038 (RRSSSSSTEMMTT) and 1060–1074 (VRPVVQHRSSSSSSS). Residues 1089 to 1099 (PNSSADKSGTM) show a composition bias toward polar residues.

In terms of assembly, homodimer. Forms a heterooligomer with SRGAP1 and SRGAP2 through its F-BAR domain. Interacts with WASF1. Probably interacts with ROBO1. Interacts with FASLG. In terms of tissue distribution, highly expressed in adult and fetal brain. Expressed at low levels in kidney. Isoform 3 is expressed in the kidney but is absent in the brain.

In terms of biological role, GTPase-activating protein for RAC1 and perhaps Cdc42, but not for RhoA small GTPase. May attenuate RAC1 signaling in neurons. The sequence is that of SLIT-ROBO Rho GTPase-activating protein 3 (SRGAP3) from Homo sapiens (Human).